The sequence spans 345 residues: Methionine import ATP-binding protein MetN (345 aa).

One can recognise an ABC transporter domain in the interval 2-241 (IKLKNISKVF…PKTLLAQEFI (240 aa)). An ATP-binding site is contributed by 38 to 45 (GASGAGKS).

It belongs to the ABC transporter superfamily. Methionine importer (TC 3.A.1.24) family. In terms of assembly, the complex is composed of two ATP-binding proteins (MetN), two transmembrane proteins (MetI) and a solute-binding protein (MetQ).

It localises to the cell inner membrane. It catalyses the reaction L-methionine(out) + ATP + H2O = L-methionine(in) + ADP + phosphate + H(+). It carries out the reaction D-methionine(out) + ATP + H2O = D-methionine(in) + ADP + phosphate + H(+). Its function is as follows. Part of the ABC transporter complex MetNIQ involved in methionine import. Responsible for energy coupling to the transport system. The chain is Methionine import ATP-binding protein MetN from Histophilus somni (strain 129Pt) (Haemophilus somnus).